Reading from the N-terminus, the 597-residue chain is Lipoprotein LpqB (597 aa).

The signal sequence occupies residues 1–28; it reads MTPGRRSALLSRSVCGAIVLAVLVTVSG. A lipid anchor (N-palmitoyl cysteine) is attached at Cys-29. The S-diacylglycerol cysteine moiety is linked to residue Cys-29. Polar residues predominate over residues 38–51; the sequence is PQAIGTINRDSPGS. Residues 38–58 are disordered; it reads PQAIGTINRDSPGSSVAAPAP.

Belongs to the LpqB lipoprotein family.

Its subcellular location is the cell membrane. This Rhodococcus jostii (strain RHA1) protein is Lipoprotein LpqB.